The following is a 965-amino-acid chain: Glycine dehydrogenase (decarboxylating) (965 aa).

Residue Lys-711 is modified to N6-(pyridoxal phosphate)lysine.

The protein belongs to the GcvP family. In terms of assembly, the glycine cleavage system is composed of four proteins: P, T, L and H. Pyridoxal 5'-phosphate serves as cofactor.

It carries out the reaction N(6)-[(R)-lipoyl]-L-lysyl-[glycine-cleavage complex H protein] + glycine + H(+) = N(6)-[(R)-S(8)-aminomethyldihydrolipoyl]-L-lysyl-[glycine-cleavage complex H protein] + CO2. The glycine cleavage system catalyzes the degradation of glycine. The P protein binds the alpha-amino group of glycine through its pyridoxal phosphate cofactor; CO(2) is released and the remaining methylamine moiety is then transferred to the lipoamide cofactor of the H protein. This chain is Glycine dehydrogenase (decarboxylating), found in Psychrobacter arcticus (strain DSM 17307 / VKM B-2377 / 273-4).